A 447-amino-acid polypeptide reads, in one-letter code: Argininosuccinate synthase (447 aa).

ATP is bound by residues 17–25 and Ala-43; that span reads AFSGGLDTS. Tyr-99 contributes to the L-citrulline binding site. Gly-129 and Thr-131 together coordinate ATP. Residues Thr-131, Asn-135, and Asp-136 each coordinate L-aspartate. Asn-135 provides a ligand contact to L-citrulline. ATP is bound at residue Asp-136. Residues Arg-139 and Ser-192 each coordinate L-citrulline. Asp-194 is a binding site for ATP. L-citrulline-binding residues include Thr-201, Glu-203, and Glu-280.

The protein belongs to the argininosuccinate synthase family. Type 2 subfamily. In terms of assembly, homotetramer.

The protein resides in the cytoplasm. The catalysed reaction is L-citrulline + L-aspartate + ATP = 2-(N(omega)-L-arginino)succinate + AMP + diphosphate + H(+). The protein operates within amino-acid biosynthesis; L-arginine biosynthesis; L-arginine from L-ornithine and carbamoyl phosphate: step 2/3. In Shigella dysenteriae serotype 1 (strain Sd197), this protein is Argininosuccinate synthase.